The chain runs to 229 residues: Potassium/proton antiporter CemA (229 aa).

The next 3 membrane-spanning stretches (helical) occupy residues 7 to 27, 106 to 126, and 189 to 209; these read LTPL…SLSF, IILH…FFIM, and IISG…KYWI.

Belongs to the CemA family.

The protein localises to the plastid. It is found in the chloroplast inner membrane. It catalyses the reaction K(+)(in) + H(+)(out) = K(+)(out) + H(+)(in). Functionally, contributes to K(+)/H(+) antiport activity by supporting proton efflux to control proton extrusion and homeostasis in chloroplasts in a light-dependent manner to modulate photosynthesis. Prevents excessive induction of non-photochemical quenching (NPQ) under continuous-light conditions. Indirectly promotes efficient inorganic carbon uptake into chloroplasts. The polypeptide is Potassium/proton antiporter CemA (Ceratophyllum demersum (Rigid hornwort)).